The primary structure comprises 140 residues: ATP synthase epsilon chain (140 aa).

The protein belongs to the ATPase epsilon chain family. As to quaternary structure, F-type ATPases have 2 components, CF(1) - the catalytic core - and CF(0) - the membrane proton channel. CF(1) has five subunits: alpha(3), beta(3), gamma(1), delta(1), epsilon(1). CF(0) has three main subunits: a, b and c.

The protein resides in the cell inner membrane. Functionally, produces ATP from ADP in the presence of a proton gradient across the membrane. The protein is ATP synthase epsilon chain of Neisseria meningitidis serogroup C / serotype 2a (strain ATCC 700532 / DSM 15464 / FAM18).